Reading from the N-terminus, the 837-residue chain is Protein translocase subunit SecA (837 aa).

ATP is bound by residues Gln85, 103–107 (GEGKT), and Asp493. Zn(2+)-binding residues include Cys821, Cys823, Cys832, and His833.

The protein belongs to the SecA family. As to quaternary structure, monomer and homodimer. Part of the essential Sec protein translocation apparatus which comprises SecA, SecYEG and auxiliary proteins SecDF. Other proteins may also be involved. The cofactor is Zn(2+).

The protein resides in the cell membrane. It is found in the cytoplasm. It catalyses the reaction ATP + H2O + cellular proteinSide 1 = ADP + phosphate + cellular proteinSide 2.. Part of the Sec protein translocase complex. Interacts with the SecYEG preprotein conducting channel. Has a central role in coupling the hydrolysis of ATP to the transfer of proteins into and across the cell membrane, serving as an ATP-driven molecular motor driving the stepwise translocation of polypeptide chains across the membrane. This chain is Protein translocase subunit SecA, found in Streptococcus pneumoniae (strain P1031).